We begin with the raw amino-acid sequence, 282 residues long: 4-hydroxy-3-methylbut-2-enyl diphosphate reductase (282 aa).

Cys-14 contributes to the [4Fe-4S] cluster binding site. (2E)-4-hydroxy-3-methylbut-2-enyl diphosphate is bound by residues His-43 and His-78. Dimethylallyl diphosphate contacts are provided by His-43 and His-78. Residues His-43 and His-78 each contribute to the isopentenyl diphosphate site. A [4Fe-4S] cluster-binding site is contributed by Cys-100. A (2E)-4-hydroxy-3-methylbut-2-enyl diphosphate-binding site is contributed by His-128. His-128 contributes to the dimethylallyl diphosphate binding site. Residue His-128 coordinates isopentenyl diphosphate. Residue Glu-130 is the Proton donor of the active site. Thr-164 contributes to the (2E)-4-hydroxy-3-methylbut-2-enyl diphosphate binding site. [4Fe-4S] cluster is bound at residue Cys-192. Residues Ser-220, Ser-221, Asn-222, and Ser-266 each contribute to the (2E)-4-hydroxy-3-methylbut-2-enyl diphosphate site. Residues Ser-220, Ser-221, Asn-222, and Ser-266 each coordinate dimethylallyl diphosphate. Positions 220, 221, 222, and 266 each coordinate isopentenyl diphosphate.

Belongs to the IspH family. The cofactor is [4Fe-4S] cluster.

The enzyme catalyses isopentenyl diphosphate + 2 oxidized [2Fe-2S]-[ferredoxin] + H2O = (2E)-4-hydroxy-3-methylbut-2-enyl diphosphate + 2 reduced [2Fe-2S]-[ferredoxin] + 2 H(+). It catalyses the reaction dimethylallyl diphosphate + 2 oxidized [2Fe-2S]-[ferredoxin] + H2O = (2E)-4-hydroxy-3-methylbut-2-enyl diphosphate + 2 reduced [2Fe-2S]-[ferredoxin] + 2 H(+). It participates in isoprenoid biosynthesis; dimethylallyl diphosphate biosynthesis; dimethylallyl diphosphate from (2E)-4-hydroxy-3-methylbutenyl diphosphate: step 1/1. Its pathway is isoprenoid biosynthesis; isopentenyl diphosphate biosynthesis via DXP pathway; isopentenyl diphosphate from 1-deoxy-D-xylulose 5-phosphate: step 6/6. Catalyzes the conversion of 1-hydroxy-2-methyl-2-(E)-butenyl 4-diphosphate (HMBPP) into a mixture of isopentenyl diphosphate (IPP) and dimethylallyl diphosphate (DMAPP). Acts in the terminal step of the DOXP/MEP pathway for isoprenoid precursor biosynthesis. This chain is 4-hydroxy-3-methylbut-2-enyl diphosphate reductase, found in Clostridium perfringens (strain ATCC 13124 / DSM 756 / JCM 1290 / NCIMB 6125 / NCTC 8237 / Type A).